The chain runs to 508 residues: Glycogen synthase (508 aa).

An ADP-alpha-D-glucose-binding site is contributed by lysine 15. The tract at residues 483-508 is disordered; that stretch reads ARNRAETRPQTASALSYREPRPAAEY.

This sequence belongs to the glycosyltransferase 1 family. Bacterial/plant glycogen synthase subfamily.

It catalyses the reaction [(1-&gt;4)-alpha-D-glucosyl](n) + ADP-alpha-D-glucose = [(1-&gt;4)-alpha-D-glucosyl](n+1) + ADP + H(+). The protein operates within glycan biosynthesis; glycogen biosynthesis. In terms of biological role, synthesizes alpha-1,4-glucan chains using ADP-glucose. In Paracidovorax citrulli (strain AAC00-1) (Acidovorax citrulli), this protein is Glycogen synthase.